Reading from the N-terminus, the 395-residue chain is Nicotinamide/nicotinic acid mononucleotide adenylyltransferase 2 (395 aa).

Disordered stretches follow at residues M1 to I34 and K62 to D102. Over residues F9–P24 the composition is skewed to pro residues. A phosphoserine mark is found at S85, S89, and S90. NAD(+) is bound by residues S167 and F168. Residues H175 and R209 each coordinate ATP. Positions 247, 282, 284, 295, 314, and 345 each coordinate NAD(+). T350–R353 contacts ATP.

The protein belongs to the eukaryotic NMN adenylyltransferase family. Co(2+) serves as cofactor.

The protein resides in the nucleus. It carries out the reaction beta-nicotinamide D-ribonucleotide + ATP + H(+) = diphosphate + NAD(+). The enzyme catalyses nicotinate beta-D-ribonucleotide + ATP + H(+) = deamido-NAD(+) + diphosphate. It functions in the pathway cofactor biosynthesis; NAD(+) biosynthesis; deamido-NAD(+) from nicotinate D-ribonucleotide: step 1/1. Its pathway is cofactor biosynthesis; NAD(+) biosynthesis; NAD(+) from nicotinamide D-ribonucleotide: step 1/1. Functionally, catalyzes the formation of NAD(+) from nicotinamide mononucleotide (NMN) and ATP. Can also use the deamidated form; nicotinic acid mononucleotide (NaMN) as substrate to form deamido-NAD(+) (NaAD). Key enzyme in both de novo and salvage pathways for NAD(+) biosynthesis. Predominantly acts in the salvage pathways via NMN. The protein is Nicotinamide/nicotinic acid mononucleotide adenylyltransferase 2 of Saccharomyces cerevisiae (strain ATCC 204508 / S288c) (Baker's yeast).